The following is a 266-amino-acid chain: MRVLISNDDGVFAEGIRTLAAAAVARGHDVTVVCPDQERSATGHGLTLQTPIRAERADELFVPGVTAWACSGTPADCMKLALFELVKDKPDLVLSGINHGPNLGTDVFCSGTVAAAMEGTLEGIPSMAISSACFQWRQFQAGAELAVEVAEQALADQWPENLLLNLNIPPCNRDAMGPLRWTRLSIRRYDEQFSSRVDPRGRAYYWLAGEVVNDLESAGEGPRDWPSDVAQIHANSPSLTPIQPDLFWRGSLSGLPQLKLKDQLVR.

Residues D8, D9, S40, and N98 each coordinate a divalent metal cation.

Belongs to the SurE nucleotidase family. It depends on a divalent metal cation as a cofactor.

It is found in the cytoplasm. It carries out the reaction a ribonucleoside 5'-phosphate + H2O = a ribonucleoside + phosphate. Its function is as follows. Nucleotidase that shows phosphatase activity on nucleoside 5'-monophosphates. This chain is 5'-nucleotidase SurE, found in Parasynechococcus marenigrum (strain WH8102).